The sequence spans 362 residues: Spermidine/putrescine import ATP-binding protein PotA (362 aa).

One can recognise an ABC transporter domain in the interval 4 to 235; the sequence is IKLDHITKQY…PVNDFVARFI (232 aa). Residue 37-44 participates in ATP binding; it reads GPSGSGKT.

This sequence belongs to the ABC transporter superfamily. Spermidine/putrescine importer (TC 3.A.1.11.1) family. The complex is composed of two ATP-binding proteins (PotA), two transmembrane proteins (PotB and PotC) and a solute-binding protein (PotD).

The protein localises to the cell membrane. It carries out the reaction ATP + H2O + polyamine-[polyamine-binding protein]Side 1 = ADP + phosphate + polyamineSide 2 + [polyamine-binding protein]Side 1.. Functionally, part of the ABC transporter complex PotABCD involved in spermidine/putrescine import. Responsible for energy coupling to the transport system. This is Spermidine/putrescine import ATP-binding protein PotA from Lactobacillus delbrueckii subsp. bulgaricus (strain ATCC 11842 / DSM 20081 / BCRC 10696 / JCM 1002 / NBRC 13953 / NCIMB 11778 / NCTC 12712 / WDCM 00102 / Lb 14).